The sequence spans 151 residues: MYLAVEIGTVDLNPVLKGAVATILYFAVGMAVLLVGFYAVDLLTPGKLRQLVFIDRRPNAVVVAGAMYIALTVVIITAIANSYSQLGQGLVGVAVYGLMGVILLGVALLAMHLLIPGSFHEHVEEPQLHPGSFAVALILLAVGGVTAAAVS.

4 consecutive transmembrane segments (helical) span residues 20–40 (VATI…FYAV), 60–80 (AVVV…TAIA), 90–110 (LVGV…ALLA), and 130–150 (PGSF…AAAV).

This sequence belongs to the UPF0719 family.

The protein resides in the cell membrane. This Mycolicibacterium paratuberculosis (strain ATCC BAA-968 / K-10) (Mycobacterium paratuberculosis) protein is UPF0719 transmembrane protein MAP_1032c.